We begin with the raw amino-acid sequence, 383 residues long: Lipid-A-disaccharide synthase (383 aa).

The protein belongs to the LpxB family.

The enzyme catalyses a lipid X + a UDP-2-N,3-O-bis[(3R)-3-hydroxyacyl]-alpha-D-glucosamine = a lipid A disaccharide + UDP + H(+). Its pathway is bacterial outer membrane biogenesis; LPS lipid A biosynthesis. Its function is as follows. Condensation of UDP-2,3-diacylglucosamine and 2,3-diacylglucosamine-1-phosphate to form lipid A disaccharide, a precursor of lipid A, a phosphorylated glycolipid that anchors the lipopolysaccharide to the outer membrane of the cell. The protein is Lipid-A-disaccharide synthase of Trichlorobacter lovleyi (strain ATCC BAA-1151 / DSM 17278 / SZ) (Geobacter lovleyi).